We begin with the raw amino-acid sequence, 2904 residues long: Highly reducing polyketide synthase bet1 (2904 aa).

One can recognise a Ketosynthase family 3 (KS3) domain in the interval 8–441 (NEPIAIVGSG…GTNAHAIVES (434 aa)). Catalysis depends on for beta-ketoacyl synthase activity residues Cys-181, His-320, and His-361. Residues 553–875 (VFTGQGAQYA…PYHGTLLRGG (323 aa)) form an acyl transferase (AT) domain region. Residues 948–1081 (HQLLGDVSPD…GELKVVLVDE (134 aa)) form an N-terminal hotdog fold region. Positions 948–1257 (HQLLGDVSPD…FKPVGSDASN (310 aa)) constitute a PKS/mFAS DH domain. A dehydratase (DH) domain region spans residues 971 to 1255 (PREMTWLEGH…VKFKPVGSDA (285 aa)). His-980 (proton acceptor; for dehydratase activity) is an active-site residue. The C-terminal hotdog fold stretch occupies residues 1098–1257 (MIPVQPSRLY…FKPVGSDASN (160 aa)). The Proton donor; for dehydratase activity role is filled by Asp-1159. Positions 1411–1596 (KQSTLWVASI…GFSGIDTMSP (186 aa)) are methyltransferase (cMeT) domain. The segment at 2125–2298 (TYWLVGLSGA…RSSVVNVGAI (174 aa)) is ketoreductase (KR)domain. The 80-residue stretch at 2407-2486 (EVANVIKQAY…SLVELAAESI (80 aa)) folds into the Carrier domain. Ser-2445 bears the O-(pantetheine 4'-phosphoryl)serine mark. Residues 2492-2543 (PGVPQANANPNGPSSPDSDATESSNQNSDVDVTSTRATSPSTPAATSPDSNV) are disordered. The segment covering 2497–2523 (ANANPNGPSSPDSDATESSNQNSDVDV) has biased composition (polar residues). Over residues 2524–2541 (TSTRATSPSTPAATSPDS) the composition is skewed to low complexity. Positions 2585–2817 (LTGCSGLLGH…DLVSVETCCE (233 aa)) are reductase (R) domain.

Pantetheine 4'-phosphate serves as cofactor.

The catalysed reaction is 7 malonyl-CoA + acetyl-CoA + 10 AH2 + 5 S-adenosyl-L-methionine + 2 H(+) = dehydroprobetaenone I + 10 A + 5 S-adenosyl-L-homocysteine + 7 CO2 + 8 CoA + 6 H2O. The protein operates within mycotoxin biosynthesis. Its function is as follows. Highly reducing polyketide synthase; part of the gene cluster that mediates the biosynthesis of betaenones, phytotoxic polyketides involved in leaf spot disease in sugar beets. The first step of the pathway is the synthesis of dehydroprobetaenone I by the polyketide synthase bet1 and the enoyl reductase bet3 via condensation of one acetyl-CoA starter unit with 7 malonyl-CoA units and 5 methylations. The C-terminal reductase (R) domain of bet1 catalyzes the reductive release of the polyketide chain. Because bet1 lacks a designated enoylreductase (ER) domain, the required activity is provided the enoyl reductase bet3. The short-chain dehydrogenase/reductase bet4 then catalyzes reduction of dehydroprobetaenone I to probetaenone I. The cytochrome P450 monooxygenase bet2 catalyzes successive epoxidation, oxidation (resulting from epoxide opening) and hydroxylation to install a tertiary alcohol in the decaline ring to yield betaenone C from dehydroprobetaenone I and betaenone B from probetaenone I. The FAD-linked oxidoreductase (orf1) is probably responsible for the conversion of betaenone C to betaenone A via an intramolecular aldol reaction between C-1 and C-17 to form the bridged tricyclic system in betaenone A. The sequence is that of Highly reducing polyketide synthase bet1 from Neocamarosporium betae (Beet black rot fungus).